We begin with the raw amino-acid sequence, 758 residues long: Actin filament-associated protein 1-like 1 (758 aa).

Positions tyrosine 91–glutamate 194 are disordered. Over residues leucine 102–glutamate 120 the composition is skewed to pro residues. Residues tyrosine 137–asparagine 148 are compositionally biased toward polar residues. The segment covering glutamate 177–glutamate 186 has biased composition (low complexity). One can recognise a PH 1 domain in the interval aspartate 216 to serine 312. The interval serine 335–glycine 369 is disordered. Residues serine 342–glycine 356 show a composition bias toward polar residues. The PH 2 domain maps to glutamate 409–glycine 503. Residues lysine 602–serine 690 adopt a coiled-coil conformation. Residues alanine 692–proline 758 form a disordered region. Positions lysine 749 to proline 758 are enriched in basic and acidic residues.

It localises to the cytoplasm. Its subcellular location is the cell projection. The protein resides in the podosome. The protein localises to the invadopodium. It is found in the cytoskeleton. It localises to the stress fiber. May be involved in podosome and invadosome formation. The sequence is that of Actin filament-associated protein 1-like 1 (afap1l1) from Xenopus tropicalis (Western clawed frog).